A 143-amino-acid chain; its full sequence is Type II secretion system core protein G (143 aa).

Positions 1–17 (MIKRSITRSPSRAGQAG) are cleaved as a propeptide — leader sequence. M18 is subject to N-methylmethionine. A helical transmembrane segment spans residues 18–38 (MSLLEIIIVIVLIGAVLTLVG).

It belongs to the GSP G family. In terms of assembly, type II secretion system is composed of four main components: the outer membrane complex, the inner membrane complex, the cytoplasmic secretion ATPase and the periplasm-spanning pseudopilus. Forms homomultimers. Interacts with pseudopilin tip complex component XpsJ as well as XpsI and XcpH. Interacts with XpsN and secretin XpsD. Cleaved by the prepilin peptidase. Post-translationally, methylated by prepilin peptidase at the amino group of the N-terminal methionine once the leader sequence is cleaved.

The protein localises to the cell inner membrane. Core component of the type II secretion system required for the energy-dependent secretion of extracellular factors such as proteases and toxins from the periplasm. Pseudopilin (pilin-like) protein that polymerizes to form the pseudopilus. Further polymerization triggers pseudopilus growth. The sequence is that of Type II secretion system core protein G (xpsG) from Xanthomonas campestris pv. campestris (strain ATCC 33913 / DSM 3586 / NCPPB 528 / LMG 568 / P 25).